We begin with the raw amino-acid sequence, 494 residues long: Cysteine--tRNA ligase (494 aa).

Residue C29 coordinates Zn(2+). Positions 31–41 (LTVSDDAHLGH) match the 'HIGH' region motif. Residues 187-220 (KAGGVSPDDANTHRDDELPPLDGERGQTWASPWG) form a disordered region. Over residues 196 to 211 (ANTHRDDELPPLDGER) the composition is skewed to basic and acidic residues. Zn(2+)-binding residues include C230, H255, and E259. A 'KMSKS' region motif is present at residues 287–291 (KMSSS).

This sequence belongs to the class-I aminoacyl-tRNA synthetase family. It depends on Zn(2+) as a cofactor.

The protein resides in the cytoplasm. The catalysed reaction is tRNA(Cys) + L-cysteine + ATP = L-cysteinyl-tRNA(Cys) + AMP + diphosphate. This Halobacterium salinarum (strain ATCC 700922 / JCM 11081 / NRC-1) (Halobacterium halobium) protein is Cysteine--tRNA ligase.